The sequence spans 695 residues: Protein ACTIVITY OF BC1 COMPLEX KINASE 7, chloroplastic (695 aa).

The 331-residue stretch at 259-589 (EFEEQPIAAA…VQEIRKQADD (331 aa)) folds into the Protein kinase domain. ATP is bound by residues 265-273 (IAAASLGQV) and Lys-287. Asp-421 serves as the catalytic Proton acceptor. The next 2 membrane-spanning stretches (helical) occupy residues 633–653 (TILQ…NIGV) and 659–679 (GSQL…LLVL).

It belongs to the protein kinase superfamily. ADCK protein kinase family. Mostly expressed in leaves and flowers, and, to a lower extent, in roots.

The protein resides in the plastid. Its subcellular location is the chloroplast thylakoid membrane. It localises to the chloroplast. The protein localises to the plastoglobule. The enzyme catalyses L-seryl-[protein] + ATP = O-phospho-L-seryl-[protein] + ADP + H(+). The catalysed reaction is L-threonyl-[protein] + ATP = O-phospho-L-threonyl-[protein] + ADP + H(+). Involved in resistance to oxidative stress. Influences responses to reactive oxygen species (ROS) production. Regulates plastoglobules formation in thylakoids. Together with OSA1, regulates iron distribution within the chloroplast and mediates the oxidative stress response. Together with ABC1K8, influences chloroplast lipid synthesis/accumulation and modulates chloroplast membrane composition in response to stress. This chain is Protein ACTIVITY OF BC1 COMPLEX KINASE 7, chloroplastic, found in Arabidopsis thaliana (Mouse-ear cress).